A 2599-amino-acid polypeptide reads, in one-letter code: Non-reducing polyketide synthase azaA (2599 aa).

Residues 95–231 (PNILLSPMVV…AARSISSLQQ (137 aa)) form an N-terminal acylcarrier protein transacylase domain (SAT) region. The active-site Nucleophile; for transacylase activity is the C132. The Proton donor/acceptor; for transacylase activity role is filled by H250. The Ketosynthase family 3 (KS3) domain occupies 372 to 790 (PNEIAVIGMS…GSNASMVVAQ (419 aa)). Active-site for beta-ketoacyl synthase activity residues include C539, H674, and H713. A malonyl-CoA:ACP transacylase (MAT) domain region spans residues 902–1193 (FGGQISNYVG…ITSMASRALG (292 aa)). Residues 1282–1413 (PKTLWSLIEA…GKLAFLSGQD (132 aa)) form an N-terminal hotdog fold region. Positions 1282–1591 (PKTLWSLIEA…YHKVAKASMS (310 aa)) constitute a PKS/mFAS DH domain. A product template (PT) domain region spans residues 1310-1589 (LVSGHVIANT…INYHKVAKAS (280 aa)). The Proton acceptor; for dehydratase activity role is filled by H1314. Residues 1443–1591 (ADDIIQGRNI…YHKVAKASMS (149 aa)) form a C-terminal hotdog fold region. Residue D1499 is the Proton donor; for dehydratase activity of the active site. Residues 1601 to 1652 (EAAPSSSTRAHPTSSSSPRLPGPFVPEDKSQNETQTAGTNAVAKKKSEKSAQ) are disordered. A compositionally biased stretch (low complexity) spans 1602–1619 (AAPSSSTRAHPTSSSSPR). The Carrier domain maps to 1653–1727 (QNVLDKTRAL…GLVEYVQSAV (75 aa)). S1687 bears the O-(pantetheine 4'-phosphoryl)serine mark. The disordered stretch occupies residues 1749-1779 (NLAASPSSSSSSTNLTEDSSLDPTETTTNIS). Residues 1750-1766 (LAASPSSSSSSTNLTED) show a composition bias toward low complexity. Residues 1769-1779 (LDPTETTTNIS) are compositionally biased toward polar residues. The tract at residues 1952–2140 (DSLLNKLSYR…VGYGQVDWTD (189 aa)) is methyltransferase domain. The tract at residues 2222 to 2467 (ITGATGSLGV…LCWTPVNDVA (246 aa)) is NADPH-binding (R) domain.

The cofactor is pantetheine 4'-phosphate.

The protein operates within secondary metabolite biosynthesis. Non-reducing polyketide synthase; part of the gene cluster that mediates the biosynthesis of azaphilones, a class of fungal metabolites characterized by a highly oxygenated pyrano-quinone bicyclic core and exhibiting a broad range of bioactivities. In the first step, the non-reducing polyketide synthase azaA forms the hexaketide precursor from successive condensations of five malonyl-CoA units, presumably with a simple acetyl-CoA starter unit. The reactive polyketide chain then undergoes a PT-mediated C2-C7 cyclization to afford the aromatic ring and is eventually released as an aldehyde through the R-domain. The putative ketoreductase azaE is proposed to catalyze the reduction of the terminal ketone resulting in the early culture product FK17-P2a. The monooxygenase azaH was demonstrated to be the only enzyme required to convert FK17-P2a to azanigerone E. AzaH first hydroxylates the benzaldehyde intermediate FK17-P2a at C4, which triggers the formation of the pyran-ring to afford azanigerone E. In parallel, the 2,4-dimethylhexanoyl chain is synthesized by the HR-PKS azaB and is proposed to be transferred to the C4-hydroxyl of azanigerone E by the acyltransferase azaD directly from the ACP domain of azaB. Alternatively, the 2,4-dimethyl-hexanoyl chain may be offloaded from the HR-PKS as a carboxylic acid and converted to an acyl-CoA by azaF. The resulting acyl-CoA molecule could then be taken up as a substrate by AzaD to form azanigerone B. To yield the carboxylic acid substituent in azanigerone A, the hydroxypropyl side chain of azanigerone B would need to undergo a C-C oxidative cleavage catalyzed by cytochrome P450 AzaI. AzaI is proposed to act on a vicinal diol that leads to a C-C bond scission either through an alkoxyradical intermediate or a peroxy complex. In the biosynthesis of azanigerone A, azanigerone B first undergoes hydroxylation at C10, possibly catalyzed by one of the two FAD-dependent monooxygenases encoded in the cluster, azaG or azaL, resulting in the vicinal diol azanigerone C. Oxidative cleavage of azanigerone C by azaI would yield the corresponding aldehyde derivative of azanigerone A. Finally, the dehydrogenase azaJ is proposed to convert the aldehyde functional group into the carboxylic acid, completing the conversion from azanigerone B to azanigerone A. Alternatively, the oxidation of aldehyde to carboxylic acid may be catalyzed by the same P450 enzyme azaI via consecutive oxidation or by endogenous alcohol dehydrogenase. This Aspergillus niger (strain ATCC 1015 / CBS 113.46 / FGSC A1144 / LSHB Ac4 / NCTC 3858a / NRRL 328 / USDA 3528.7) protein is Non-reducing polyketide synthase azaA.